The primary structure comprises 620 residues: UvrABC system protein C (620 aa).

The GIY-YIG domain maps to 13–92 (DKPGVYIMKN…IKKYSPRYNI (80 aa)). The UVR domain maps to 204–239 (TSIIKKLKLEMEKAAEELEFEKAAKIRDRILAIELI).

The protein belongs to the UvrC family. As to quaternary structure, interacts with UvrB in an incision complex.

Its subcellular location is the cytoplasm. Functionally, the UvrABC repair system catalyzes the recognition and processing of DNA lesions. UvrC both incises the 5' and 3' sides of the lesion. The N-terminal half is responsible for the 3' incision and the C-terminal half is responsible for the 5' incision. The polypeptide is UvrABC system protein C (Clostridium perfringens (strain ATCC 13124 / DSM 756 / JCM 1290 / NCIMB 6125 / NCTC 8237 / Type A)).